Reading from the N-terminus, the 156-residue chain is MAVGILEVSLISGKGLKRSDFLGKIDPYVEIQYKGQTRKSSVAKEDGGRNPTWNDKLKWRAEFPGSGADYKLIVKVMDHDTFSSDDFIGEATVHVKELLEMGVEKGTAELRPTKYNIVDSDLSFVGELLIGVSYSLLQDRGMDGEQFGGWKHSQVD.

The C2 domain occupies 1–108 (MAVGILEVSL…LEMGVEKGTA (108 aa)). Ca(2+) contacts are provided by Asp20, Asp26, Asp78, Asp80, Ser83, and Asp86.

Ca(2+) is required as a cofactor.

Its function is as follows. Binds to both sense and antisense RNA. Can also bind sheared DNA and dodecamer DNA with a low affinity. Interacts with mesophyll plasmodesmata to mediate its own cell-to-cell transport and potentiate RNA trafficking. May play a role in plant defense signaling. This Arabidopsis thaliana (Mouse-ear cress) protein is 16 kDa phloem protein 1.